The chain runs to 51 residues: Sec-independent protein translocase protein TatA (51 aa).

Residues 1 to 21 traverse the membrane as a helical segment; the sequence is MGMSFSHLLIILLIIFVLFGA.

Belongs to the TatA/E family. In terms of assembly, the Tat system comprises two distinct complexes: a TatABC complex, containing multiple copies of TatA, TatB and TatC subunits, and a separate TatA complex, containing only TatA subunits. Substrates initially bind to the TatABC complex, which probably triggers association of the separate TatA complex to form the active translocon.

The protein resides in the cell inner membrane. Part of the twin-arginine translocation (Tat) system that transports large folded proteins containing a characteristic twin-arginine motif in their signal peptide across membranes. TatA could form the protein-conducting channel of the Tat system. The protein is Sec-independent protein translocase protein TatA of Rickettsia bellii (strain RML369-C).